The primary structure comprises 450 residues: Cyclic GMP-AMP phosphodiesterase SMPDL3A (450 aa).

The signal sequence occupies residues 1–22; sequence MARLGALVCCLLAAWHCRPGLG. Zn(2+) is bound by residues D42 and H44. An intrachain disulfide couples C59 to C78. Zn(2+) is bound at residue D107. H111 is an ATP binding site. N-linked (GlcNAc...) asparagine glycosylation is found at N124 and N128. Position 148 (N148) interacts with Zn(2+). Residues N148 and H149 each contribute to the ATP site. N-linked (GlcNAc...) asparagine glycans are attached at residues N219 and N235. Zn(2+) contacts are provided by H249, H290, and H292. N-linked (GlcNAc...) asparagine glycosylation is found at N353 and N370. 2 cysteine pairs are disulfide-bonded: C417-C421 and C427-C440.

The protein belongs to the acid sphingomyelinase family. In terms of assembly, monomer. Homodimer; homodimerizes following 2',3'-cGAMP-binding. The cofactor is Zn(2+).

It is found in the secreted. The catalysed reaction is 2',3'-cGAMP + H2O = 5'-pGpA(2'-5') + H(+). It catalyses the reaction 5'-pGpA(2'-5') + H2O = 5'-GpA(2'-5') + phosphate. It carries out the reaction a ribonucleoside 5'-triphosphate + H2O = a ribonucleoside 5'-diphosphate + phosphate + H(+). The enzyme catalyses ATP + H2O = ADP + phosphate + H(+). In terms of biological role, cyclic-nucleotide phosphodiesterase that acts as a negative regulator of innate immunity by mediating degradation of 2',3'-cGAMP, thereby inhibiting the cGAS-STING signaling. Specifically linearizes 2',3'-cGAMP into 2'5'-bond pGpA and further hydrolyzes pGpA to produce GpA. Also has in vitro nucleotide phosphodiesterase activity with nucleoside triphosphates, such as ATP. Has in vitro activity with p-nitrophenyl-TMP. Has lower activity with nucleoside diphosphates, and no activity with nucleoside monophosphates. Has in vitro activity with CDP-choline, giving rise to CMP and phosphocholine. Has in vitro activity with CDP-ethanolamine. Does not have sphingomyelin phosphodiesterase activity. This chain is Cyclic GMP-AMP phosphodiesterase SMPDL3A (SMPDL3A), found in Bos taurus (Bovine).